The chain runs to 397 residues: F-box protein At5g25290 (397 aa).

Residues 11-56 (VTLWSEIPMDILRSVFERLSFVDLHRAKIVCSHWYSCSKQSFLRKT) enclose the F-box domain.

The chain is F-box protein At5g25290 from Arabidopsis thaliana (Mouse-ear cress).